Here is a 481-residue protein sequence, read N- to C-terminus: Inosine-5'-monophosphate dehydrogenase (481 aa).

2 consecutive CBS domains span residues 92 to 148 (VIND…SKKV) and 152 to 209 (MTKM…PEAN). NAD(+)-binding positions include Asp-244 and 293-295 (GIG). Residues Gly-295 and Gly-297 each coordinate K(+). Ser-298 contacts IMP. Residue Cys-300 coordinates K(+). Cys-300 serves as the catalytic Thioimidate intermediate. Residues 333–335 (DGG), 356–357 (GS), and 380–384 (YRGMG) each bind IMP. The Proton acceptor role is filled by Arg-396. Residue Glu-410 coordinates IMP. 3 residues coordinate K(+): Glu-464, Ser-465, and His-466.

It belongs to the IMPDH/GMPR family. As to quaternary structure, homotetramer. Requires K(+) as cofactor.

It carries out the reaction IMP + NAD(+) + H2O = XMP + NADH + H(+). The protein operates within purine metabolism; XMP biosynthesis via de novo pathway; XMP from IMP: step 1/1. With respect to regulation, mycophenolic acid (MPA) is a non-competitive inhibitor that prevents formation of the closed enzyme conformation by binding to the same site as the amobile flap. In contrast, mizoribine monophosphate (MZP) is a competitive inhibitor that induces the closed conformation. MPA is a potent inhibitor of mammalian IMPDHs but a poor inhibitor of the bacterial enzymes. MZP is a more potent inhibitor of bacterial IMPDH. Functionally, catalyzes the conversion of inosine 5'-phosphate (IMP) to xanthosine 5'-phosphate (XMP), the first committed and rate-limiting step in the de novo synthesis of guanine nucleotides, and therefore plays an important role in the regulation of cell growth. The sequence is that of Inosine-5'-monophosphate dehydrogenase from Helicobacter pylori (strain J99 / ATCC 700824) (Campylobacter pylori J99).